Reading from the N-terminus, the 338-residue chain is Inositol 2-dehydrogenase 4 (338 aa).

Belongs to the Gfo/Idh/MocA family. In terms of assembly, homotetramer.

It carries out the reaction myo-inositol + NAD(+) = scyllo-inosose + NADH + H(+). In terms of biological role, involved in the oxidation of myo-inositol (MI) to 2-keto-myo-inositol (2KMI or 2-inosose). The protein is Inositol 2-dehydrogenase 4 of Saccharopolyspora erythraea (strain ATCC 11635 / DSM 40517 / JCM 4748 / NBRC 13426 / NCIMB 8594 / NRRL 2338).